The sequence spans 250 residues: Hydroxyacylglutathione hydrolase (250 aa).

Residues His-52, His-54, Asp-56, His-57, His-107, Asp-128, and His-166 each coordinate Zn(2+).

This sequence belongs to the metallo-beta-lactamase superfamily. Glyoxalase II family. Monomer. Zn(2+) is required as a cofactor.

It carries out the reaction an S-(2-hydroxyacyl)glutathione + H2O = a 2-hydroxy carboxylate + glutathione + H(+). The protein operates within secondary metabolite metabolism; methylglyoxal degradation; (R)-lactate from methylglyoxal: step 2/2. Functionally, thiolesterase that catalyzes the hydrolysis of S-D-lactoyl-glutathione to form glutathione and D-lactic acid. The chain is Hydroxyacylglutathione hydrolase from Neisseria gonorrhoeae (strain NCCP11945).